A 504-amino-acid chain; its full sequence is Xylose import ATP-binding protein XylG (504 aa).

ABC transporter domains follow at residues 5-242 (LEMK…VGRE) and 259-500 (LRVE…VMEA). Residue 37-44 (GENGSGKS) coordinates ATP.

It belongs to the ABC transporter superfamily. Xylose importer (TC 3.A.1.2.4) family. As to quaternary structure, the complex is composed of two ATP-binding proteins (XylG), two transmembrane proteins (XylH) and a solute-binding protein (XylF).

It localises to the cell inner membrane. It carries out the reaction D-xylose(out) + ATP + H2O = D-xylose(in) + ADP + phosphate + H(+). Its function is as follows. Part of the ABC transporter complex XylFGH involved in xylose import. Responsible for energy coupling to the transport system. The polypeptide is Xylose import ATP-binding protein XylG (Histophilus somni (strain 129Pt) (Haemophilus somnus)).